Reading from the N-terminus, the 557-residue chain is Putative UDP-glucuronate:xylan alpha-glucuronosyltransferase 4 (557 aa).

A helical; Signal-anchor for type II membrane protein transmembrane segment spans residues 11–31 (KIFMIYLILVSLSLLGLILPF). 2 residues coordinate Mn(2+): aspartate 365 and aspartate 367. Substrate contacts are provided by residues 365-367 (DAD), 394-396 (NSG), 421-425 (NGGDQ), and 466-471 (HYLGLK). Histidine 466 lines the Mn(2+) pocket.

It belongs to the glycosyltransferase 8 family. Glycogenin subfamily. The cofactor is Mn(2+).

The protein resides in the golgi apparatus membrane. Functionally, may be involved in the substitutions of the xylan backbone in stem glucuronoxylan. The sequence is that of Putative UDP-glucuronate:xylan alpha-glucuronosyltransferase 4 (GUX4) from Arabidopsis thaliana (Mouse-ear cress).